The primary structure comprises 321 residues: Basic peroxidase (321 aa).

The signal sequence occupies residues 1–30 (MSYHKSSGTTLMVPLFMLLISVNYFMSCNA). Position 31 is a pyrrolidone carboxylic acid (Gln-31). 4 disulfide bridges follow: Cys-41–Cys-117, Cys-74–Cys-79, Cys-123–Cys-317, and Cys-202–Cys-228. Residue His-72 is the Proton acceptor of the active site. Ca(2+) is bound by residues Asp-73, Val-76, Gly-78, Asp-80, and Ser-82. Pro-165 lines the substrate pocket. Position 195 (His-195) interacts with heme b. Thr-196 contributes to the Ca(2+) binding site. 2 N-linked (GlcNAc...) asparagine glycosylation sites follow: Asn-211 and Asn-221. Ca(2+) is bound by residues Asp-241, Thr-244, and Asp-249.

The protein belongs to the peroxidase family. Classical plant (class III) peroxidase subfamily. Heme b serves as cofactor. Ca(2+) is required as a cofactor. N-glycosylated. In terms of tissue distribution, expressed in tracheary elements, roots, young and old hypocotyls, and stems in the partially glycosylated form and in roots and young hypocotyls in the fully glycosylated form. None of the isoforms is significantly expressed in leaves or cotyledons.

It localises to the secreted. It catalyses the reaction 2 a phenolic donor + H2O2 = 2 a phenolic radical donor + 2 H2O. In terms of biological role, removal of H(2)O(2), oxidation of toxic reductants, biosynthesis and degradation of lignin, suberization, auxin catabolism, response to environmental stresses such as wounding, pathogen attack and oxidative stress. These functions might be dependent on each isozyme/isoform in each plant tissue. Involved in the synthesis of highly polymerized lignins. The chain is Basic peroxidase (POD3) from Zinnia elegans (Garden zinnia).